A 395-amino-acid polypeptide reads, in one-letter code: Phosphoglycerate kinase (395 aa).

Substrate-binding positions include 21–23 (DFN), Arg-36, 59–62 (HLGR), Arg-120, and Arg-153. ATP-binding positions include Lys-203, Gly-294, Glu-325, and 351–354 (GGDS).

The protein belongs to the phosphoglycerate kinase family. In terms of assembly, monomer.

The protein resides in the cytoplasm. The enzyme catalyses (2R)-3-phosphoglycerate + ATP = (2R)-3-phospho-glyceroyl phosphate + ADP. It participates in carbohydrate degradation; glycolysis; pyruvate from D-glyceraldehyde 3-phosphate: step 2/5. This Finegoldia magna (strain ATCC 29328 / DSM 20472 / WAL 2508) (Peptostreptococcus magnus) protein is Phosphoglycerate kinase.